The following is a 324-amino-acid chain: Beta-ketoacyl-[acyl-carrier-protein] synthase III (324 aa).

Residues cysteine 113 and histidine 251 contribute to the active site. Residues 252-256 are ACP-binding; the sequence is QANKR. The active site involves asparagine 281.

The protein belongs to the thiolase-like superfamily. FabH family. In terms of assembly, homodimer.

The protein localises to the cytoplasm. The enzyme catalyses malonyl-[ACP] + acetyl-CoA + H(+) = 3-oxobutanoyl-[ACP] + CO2 + CoA. The protein operates within lipid metabolism; fatty acid biosynthesis. Its function is as follows. Catalyzes the condensation reaction of fatty acid synthesis by the addition to an acyl acceptor of two carbons from malonyl-ACP. Catalyzes the first condensation reaction which initiates fatty acid synthesis and may therefore play a role in governing the total rate of fatty acid production. Possesses both acetoacetyl-ACP synthase and acetyl transacylase activities. Its substrate specificity determines the biosynthesis of branched-chain and/or straight-chain of fatty acids. The sequence is that of Beta-ketoacyl-[acyl-carrier-protein] synthase III from Bartonella henselae (strain ATCC 49882 / DSM 28221 / CCUG 30454 / Houston 1) (Rochalimaea henselae).